A 170-amino-acid chain; its full sequence is MSTQDRPSGSGQDPQDRLTHIDEAGAARMVDVSGKDVTARTARASGRVLVAPRVVELLRGEGVPKGDALATARIAGIMGAKRTPDLIPLCHPLSVSGVKLDLSVADDAVEITATVRTTDRTGVEMEALTAVSVAALTVVDMVKAVDKGAVITDVRVEQKTGGKSGDWTRS.

Residues 89–91 (LCH) and 125–126 (ME) contribute to the substrate site. Residue D140 is part of the active site.

Belongs to the MoaC family. In terms of assembly, homohexamer; trimer of dimers.

The enzyme catalyses (8S)-3',8-cyclo-7,8-dihydroguanosine 5'-triphosphate = cyclic pyranopterin phosphate + diphosphate. It functions in the pathway cofactor biosynthesis; molybdopterin biosynthesis. Catalyzes the conversion of (8S)-3',8-cyclo-7,8-dihydroguanosine 5'-triphosphate to cyclic pyranopterin monophosphate (cPMP). The polypeptide is Cyclic pyranopterin monophosphate synthase (Streptomyces coelicolor (strain ATCC BAA-471 / A3(2) / M145)).